The following is an 862-amino-acid chain: Taxadiene synthase (862 aa).

Positions 45–66 are disordered; sequence RVKMSRGSGGPGPVVMMSSSTG. Mg(2+)-binding residues include aspartate 613, aspartate 617, asparagine 757, threonine 761, and glutamate 765. Positions 613-617 match the DDXXD motif motif; it reads DDMAD.

The protein belongs to the terpene synthase family. Mg(2+) serves as cofactor.

It catalyses the reaction (2E,6E,10E)-geranylgeranyl diphosphate = taxa-4(5),11(12)-diene + diphosphate. It functions in the pathway alkaloid biosynthesis; taxol biosynthesis; taxa-4(20),11-dien-5alpha-ol from geranylgeranyl diphosphate: step 1/2. Catalyzes the cyclization of the ubiquitous isoprenoid intermediate geranylgeranyl diphosphate to taxa-4,11-diene, the parent olefin with a taxane skeleton. The protein is Taxadiene synthase (TDC1) of Taxus chinensis (Chinese yew).